Here is a 103-residue protein sequence, read N- to C-terminus: Small ribosomal subunit protein uS10 (103 aa).

The protein belongs to the universal ribosomal protein uS10 family. In terms of assembly, part of the 30S ribosomal subunit.

Its function is as follows. Involved in the binding of tRNA to the ribosomes. The protein is Small ribosomal subunit protein uS10 of Polynucleobacter necessarius subsp. necessarius (strain STIR1).